A 184-amino-acid chain; its full sequence is ATP synthase subunit b, chloroplastic (184 aa).

The helical transmembrane segment at 27–49 (LATNPINLSIVIGVLIFFGKGVL) threads the bilayer.

It belongs to the ATPase B chain family. In terms of assembly, F-type ATPases have 2 components, F(1) - the catalytic core - and F(0) - the membrane proton channel. F(1) has five subunits: alpha(3), beta(3), gamma(1), delta(1), epsilon(1). F(0) has four main subunits: a(1), b(1), b'(1) and c(10-14). The alpha and beta chains form an alternating ring which encloses part of the gamma chain. F(1) is attached to F(0) by a central stalk formed by the gamma and epsilon chains, while a peripheral stalk is formed by the delta, b and b' chains.

It is found in the plastid. The protein localises to the chloroplast thylakoid membrane. In terms of biological role, f(1)F(0) ATP synthase produces ATP from ADP in the presence of a proton or sodium gradient. F-type ATPases consist of two structural domains, F(1) containing the extramembraneous catalytic core and F(0) containing the membrane proton channel, linked together by a central stalk and a peripheral stalk. During catalysis, ATP synthesis in the catalytic domain of F(1) is coupled via a rotary mechanism of the central stalk subunits to proton translocation. Functionally, component of the F(0) channel, it forms part of the peripheral stalk, linking F(1) to F(0). The sequence is that of ATP synthase subunit b, chloroplastic from Lotus japonicus (Lotus corniculatus var. japonicus).